Here is a 361-residue protein sequence, read N- to C-terminus: Outer mitochondrial transmembrane helix translocase (361 aa).

Over 1-15 the chain is Mitochondrial intermembrane; sequence MVHAEAFSRPLSRNE. Residues 16–32 form a helical membrane-spanning segment; sequence VVGLIFRLTIFGAVTYF. The Cytoplasmic portion of the chain corresponds to 33 to 361; it reads TIKWMVDAID…QNVLTHVCLD (329 aa). 133-140 is a binding site for ATP; that stretch reads GPPGCGKT. Residue Ser322 is modified to Phosphoserine.

This sequence belongs to the AAA ATPase family. MSP1 subfamily. Interacts with GRIA2 and GRIP1 in an ATP-dependent manner. ATAD1-catalyzed ATP hydrolysis disrupts not only its binding to GRIA2 and GRIP1, but also interaction between GRIP1 and GRIA2, leading to AMPAR complex disassembly.

It is found in the mitochondrion outer membrane. The protein resides in the peroxisome membrane. It localises to the postsynaptic cell membrane. The catalysed reaction is [protein]-with a C-terminal TM segment(out) + ATP + H2O = [protein]-with a C-terminal TM segment(in) + ADP + phosphate + H(+). Its function is as follows. Outer mitochondrial translocase required to remove mislocalized tail-anchored transmembrane proteins on mitochondria. Specifically recognizes and binds tail-anchored transmembrane proteins: acts as a dislocase that mediates the ATP-dependent extraction of mistargeted tail-anchored transmembrane proteins from the mitochondrion outer membrane. Also plays a critical role in regulating the surface expression of AMPA receptors (AMPAR), thereby regulating synaptic plasticity and learning and memory. Required for NMDA-stimulated AMPAR internalization and inhibition of GRIA1 and GRIA2 recycling back to the plasma membrane; these activities are ATPase-dependent. In Homo sapiens (Human), this protein is Outer mitochondrial transmembrane helix translocase.